A 737-amino-acid chain; its full sequence is MAKQVFQTTFAGRELIVETGQVAKQANGSVVVRYGESTVLTAAVMSKKMATGDFFPLQVNYEEKMYAAGKFPGGFMKREGRPSTDATLTARLIDRPIRPMFAEGFRNEVQVINTVLSYDENASAPMAAMFGSSLALSISDIPFDGPIAGVQVGYVDGQIIINPSQEQAEQSLLELTVAGTKHAINMVESGAKELSEEIMLEALLKGHEAVKELIAFQEEIVAAVGKEKAEVELLHVDAELQAEIIAAYNSDLQKAVQVEEKLAREAATQAVKDQVTAVYEEKYANHEEFDRIMRDVAEILEQMEHAEVRRLITEDKVRPDGRKVDEIRPLDAVVDFLPRVHGSGLFTRGQTQALSVLTLAPMGETQIIDGLDPEYKKRFMHHYNFPQYSVGETGRYGAPGRREIGHGALGERALAQVLPSLEEFPYAIRLVAEVLESNGSSSQASICAGTLALMTGGVPIKAPVAGIAMGLISDGNNYTVLTDIQGLEDHFGDMDFKVAGTRDGITALQMDIKIQGITAEILTEALAQAKKARFEILDVIEATIPEVRPELAPTAPKIDTIKIDVDKIKIVIGKGGETIDKIIAETGVKIDIDEEGNVSIYSSDQDAINRAKEIIAGLVREAKVDEVYRAKVVRIEKFGAFVNLFDKTDALVHISEMAWTRTNRVEDLVEIGDEVDVKVIKIDEKGRIDASMKALLPRPPKPEHDEKGEKSERPHRPRHHKDHKPKKEFTETPKDSE.

Residues D489 and D495 each coordinate Mg(2+). Residues 556-615 (PKIDTIKIDVDKIKIVIGKGGETIDKIIAETGVKIDIDEEGNVSIYSSDQDAINRAKEII) form the KH domain. In terms of domain architecture, S1 motif spans 625–693 (DEVYRAKVVR…EKGRIDASMK (69 aa)). Positions 691–737 (SMKALLPRPPKPEHDEKGEKSERPHRPRHHKDHKPKKEFTETPKDSE) are disordered. A compositionally biased stretch (basic and acidic residues) spans 700-714 (PKPEHDEKGEKSERP). The span at 715–724 (HRPRHHKDHK) shows a compositional bias: basic residues. Positions 725–737 (PKKEFTETPKDSE) are enriched in basic and acidic residues.

The protein belongs to the polyribonucleotide nucleotidyltransferase family. Requires Mg(2+) as cofactor.

It localises to the cytoplasm. The enzyme catalyses RNA(n+1) + phosphate = RNA(n) + a ribonucleoside 5'-diphosphate. Involved in mRNA degradation. Catalyzes the phosphorolysis of single-stranded polyribonucleotides processively in the 3'- to 5'-direction. The protein is Polyribonucleotide nucleotidyltransferase of Streptococcus pneumoniae (strain ATCC 700669 / Spain 23F-1).